The chain runs to 77 residues: Protein RADIALIS-like 4 (77 aa).

The 56-residue stretch at 6 to 61 folds into the SANT domain; it reads MSTSSWTAREDKQFEMALAKFDKDTPDRWQKIARAVGGKSTEEVKRHYELLLRDVN.

Expressed just outside the vascular bundles in the rosette stem and the leaf traces. Not detected in floral primordia.

It localises to the nucleus. In terms of biological role, probable transcription factor. The sequence is that of Protein RADIALIS-like 4 (RL4) from Arabidopsis thaliana (Mouse-ear cress).